A 271-amino-acid chain; its full sequence is Shikimate dehydrogenase (NADP(+)) (271 aa).

Shikimate is bound by residues 14 to 16 (SLS) and Thr-61. Lys-65 functions as the Proton acceptor in the catalytic mechanism. Shikimate contacts are provided by Asn-86 and Asp-101. NADP(+)-binding positions include 125 to 129 (GAGGA) and Ile-212. Tyr-214 is a binding site for shikimate. Gly-235 is an NADP(+) binding site.

Belongs to the shikimate dehydrogenase family. In terms of assembly, homodimer.

It carries out the reaction shikimate + NADP(+) = 3-dehydroshikimate + NADPH + H(+). It functions in the pathway metabolic intermediate biosynthesis; chorismate biosynthesis; chorismate from D-erythrose 4-phosphate and phosphoenolpyruvate: step 4/7. Its function is as follows. Involved in the biosynthesis of the chorismate, which leads to the biosynthesis of aromatic amino acids. Catalyzes the reversible NADPH linked reduction of 3-dehydroshikimate (DHSA) to yield shikimate (SA). This Clostridium perfringens (strain SM101 / Type A) protein is Shikimate dehydrogenase (NADP(+)).